The primary structure comprises 564 residues: Dicarboxylate transporter 2, chloroplastic (564 aa).

A chloroplast-targeting transit peptide spans 1–22; that stretch reads MESLALLPTLSLSTTTTTSKAT. The segment at 35–58 is disordered; sequence RRPHLSLSLSSTPKPTLTFSSHSH. Residues 39–58 are compositionally biased toward low complexity; sequence LSLSLSSTPKPTLTFSSHSH. The next 12 helical transmembrane spans lie at 94-114, 127-147, 166-186, 235-255, 262-282, 307-327, 356-376, 380-400, 415-435, 451-471, 484-504, and 538-558; these read GAKLIPLILSVSVGLLLRFAV, LLAIFLSTVAGLVLSPLPVGA, TAFCAFTNEVIWLIVISFFFA, AGGIFLPIIKSLSISSGSLPG, LGTYLIMTQFQSAGNSSALFL, VFWLKAASLPAFVALLLTPLI, VTKNEWVMVGTMLLAVSLWVF, IGVSSVVAAMLGLSVLLLLGV, TLAWFAVLVGMASQLTNLGIV, LSWPAAFGILQAAYFFVHYLF, AFLAMNIASGVPGVLAALALA, and MGFIMAVINATIWTVVGGVWW.

This sequence belongs to the SLC13A/DASS transporter (TC 2.A.47) family. DIT1 subfamily. In terms of tissue distribution, expressed in leaves.

The protein localises to the plastid. Its subcellular location is the chloroplast inner membrane. Functionally, glutamate/malate translocator involved with DIT1 in primary ammonia assimilation and in the re-assimilation of ammonia generated by the photorespiratory pathway. Exports the end product of ammonia assimilation, glutamate, from plastids to the cytosol. The precursor for ammonia assimilation, 2-oxoglutarate, is imported from the cytosol by DIT1. In Spinacia oleracea (Spinach), this protein is Dicarboxylate transporter 2, chloroplastic (DIT2).